Here is a 941-residue protein sequence, read N- to C-terminus: Bifunctional glutamine synthetase adenylyltransferase/adenylyl-removing enzyme (941 aa).

Residues 1-431 form an adenylyl removase region; the sequence is MSSAPPFAAA…TFRNAFRLAG (431 aa). The tract at residues 447-941 is adenylyl transferase; that stretch reads NGHGMRPHAG…DGTIAQAEVK (495 aa).

This sequence belongs to the GlnE family. The cofactor is Mg(2+).

It carries out the reaction [glutamine synthetase]-O(4)-(5'-adenylyl)-L-tyrosine + phosphate = [glutamine synthetase]-L-tyrosine + ADP. The enzyme catalyses [glutamine synthetase]-L-tyrosine + ATP = [glutamine synthetase]-O(4)-(5'-adenylyl)-L-tyrosine + diphosphate. Involved in the regulation of glutamine synthetase GlnA, a key enzyme in the process to assimilate ammonia. When cellular nitrogen levels are high, the C-terminal adenylyl transferase (AT) inactivates GlnA by covalent transfer of an adenylyl group from ATP to specific tyrosine residue of GlnA, thus reducing its activity. Conversely, when nitrogen levels are low, the N-terminal adenylyl removase (AR) activates GlnA by removing the adenylyl group by phosphorolysis, increasing its activity. The regulatory region of GlnE binds the signal transduction protein PII (GlnB) which indicates the nitrogen status of the cell. The chain is Bifunctional glutamine synthetase adenylyltransferase/adenylyl-removing enzyme from Bordetella bronchiseptica (strain ATCC BAA-588 / NCTC 13252 / RB50) (Alcaligenes bronchisepticus).